Here is a 606-residue protein sequence, read N- to C-terminus: Cryptochrome-1 (606 aa).

The region spanning 3 to 132 (VNAVHWFRKG…EVIVRISHTL (130 aa)) is the Photolyase/cryptochrome alpha/beta domain. A Glycyl lysine isopeptide (Lys-Gly) (interchain with G-Cter in ubiquitin) cross-link involves residue Lys11. An LIR 1 motif is present at residues 50 to 54 (NRWRF). Ser71 is subject to Phosphoserine; by AMPK. The LIR 2 motif lies at 82–87 (DVFPRL). Lys107 is covalently cross-linked (Glycyl lysine isopeptide (Lys-Gly) (interchain with G-Cter in ubiquitin)). An LIR 3 motif is present at residues 151 to 156 (KRFQTL). Lys159 participates in a covalent cross-link: Glycyl lysine isopeptide (Lys-Gly) (interchain with G-Cter in ubiquitin). Ser247 is subject to Phosphoserine; by MAPK. Ser252 provides a ligand contact to FAD. Short sequence motifs (LIR) lie at residues 255–260 (LRFGCL) and 271–276 (DLYKKV). Ser280 carries the phosphoserine; by AMPK modification. The LIR 6 signature appears at 285 to 290 (SLYGQL). Position 289 (Gln289) interacts with FAD. Lys329 is covalently cross-linked (Glycyl lysine isopeptide (Lys-Gly) (interchain with G-Cter in ubiquitin)). The short motif at 335–339 (TGFPW) is the LIR 7 element. His355 is an FAD binding site. Residues 371-470 (WISWEEGMKV…LIGVNYPKPM (100 aa)) form a required for inhibition of CLOCK-BMAL1-mediated transcription region. Residues 379–384 (KVFEEL) carry the LIR 8 motif. 387 to 389 (DAD) is an FAD binding site. 3 short sequence motifs (LIR) span residues 395–400 (GSWMWL), 411–416 (HCYCPV), and 430–435 (RRYLPV). Residues 471-493 (VNHAEASRLNIERMKQIYQQLSR) are interaction with TIMELESS. Lys485 participates in a covalent cross-link: Glycyl lysine isopeptide (Lys-Gly) (interchain with G-Cter in ubiquitin). 2 short sequence motifs (LIR) span residues 486–491 (QIYQQL) and 492–497 (SRYRGL). Residues 559–606 (YAHGDSQQTHSLKQGRSSAGTGLSSGKRPSQEEDAQSVGPKVQRQSSN) form a disordered region. Residues 563-586 (DSQQTHSLKQGRSSAGTGLSSGKR) show a composition bias toward polar residues. A Glycyl lysine isopeptide (Lys-Gly) (interchain with G-Cter in ubiquitin) cross-link involves residue Lys585. Ser588 bears the Phosphoserine mark.

The protein belongs to the DNA photolyase class-1 family. Component of the circadian core oscillator, which includes the CRY proteins, CLOCK or NPAS2, BMAL1 or BMAL2, CSNK1D and/or CSNK1E, TIMELESS, and the PER proteins. Interacts directly with TIMELESS. Interacts directly with PER1 and PER2; interaction with PER2 inhibits its ubiquitination and vice versa. Interacts with PER3. Interacts with FBXL21. Interacts with FBXL3. Interacts with PPP5C (via TPR repeats). Interacts with CLOCK-BMAL1 independently of PER2 and DNA. Interacts with HDAC1, HDAC2 and SIN3B. Interacts with nuclear receptors AR, NR1D1, NR3C1/GR, RORA and RORC; the interaction with at least NR3C1/GR is ligand dependent. Interacts with PRKDC. Interacts with the G protein subunit alpha GNAS; the interaction may block GPCR-mediated regulation of cAMP concentrations. Interacts with PRMT5. Interacts with EZH2. Interacts with MYBBP1A, DOCK7, HNRNPU, RPL7A, RPL8 and RPS3. Interacts with MAP1LC3B. Interacts with CLOCK. Interacts with BMAL1. Interacts weakly with HDAC3; this interaction is enhanced in the presence of FBXL3. Interacts with TRIM28, KCTD5 and DDB1. Interacts with DTL. Interacts with DDB1-CUL4A complex. Interacts with FOXO1. Interacts with PSMD2 in a KDM8-dependent manner. Interacts with KDM8 in a FBXL3-dependent manner. Interacts with PPARA. Interacts with PPARG in a ligand-dependent manner. Interacts with PPARD (via domain NR LBD) in a ligand-dependent manner. Interacts with NR1I2 (via domain NR LBD) in a ligand-dependent manner. Interacts with NR1I3, VDR and HNF4A. The cofactor is FAD. (6R)-5,10-methylene-5,6,7,8-tetrahydrofolate serves as cofactor. Post-translationally, phosphorylation on Ser-247 by MAPK is important for the inhibition of CLOCK-BMAL1-mediated transcriptional activity. Phosphorylation by CSNK1E requires interaction with PER1 or PER2. Phosphorylation at Ser-71 and Ser-280 by AMPK decreases protein stability. Phosphorylation at Ser-588 exhibits a robust circadian rhythm with a peak at CT8, increases protein stability, prevents SCF(FBXL3)-mediated degradation and is antagonized by interaction with PRKDC. In terms of processing, ubiquitinated by the SCF(FBXL3) and SCF(FBXL21) complexes, regulating the balance between degradation and stabilization. The SCF(FBXL3) complex is mainly nuclear and mediates ubiquitination and subsequent degradation of CRY1. In contrast, cytoplasmic SCF(FBXL21) complex-mediated ubiquitination leads to stabilize CRY1 and counteract the activity of the SCF(FBXL3) complex. The SCF(FBXL3) and SCF(FBXL21) complexes probably mediate ubiquitination at different Lys residues. Ubiquitination at Lys-11 and Lys-107 are specifically ubiquitinated by the SCF(FBXL21) complex but not by the SCF(FBXL3) complex. Ubiquitination may be inhibited by PER2. Deubiquitinated by USP7. Undergoes autophagy-mediated degradation in the liver in a time-dependent manner. Autophagic degradation of CRY1 (an inhibitor of gluconeogenesis) occurs during periods of reduced feeding allowing induction of gluconeogenesis and maintenance of blood glucose levels. As to expression, expressed in cones, amacrine cells, and retinal ganglion cells of the retina (at protein level). Expressed in all tissues examined including heart, brain, spleen, lung, liver, skeletal muscle, kidney and testis. Higher levels in brain, liver and testis. In the retina, highly expressed in the ganglion cell layer (GCL) and in the inner nuclear layer (INL). Evenly distributed in central and peripheral retina. In the brain, highly expressed in the suprachiasmatic nucleus (SCN). High levels in cerebral cortical layers particularly in the pyramidial cell layer of the hippocampus, the granular cell layer of the dentate gyrus (DG) and the pyramidal cell layer of the piriform cortex (PFC).

It localises to the cytoplasm. The protein localises to the nucleus. Its activity is regulated as follows. KL001 (N-[3-(9H-carbazol-9-yl)-2-hydroxypropyl]-N-(2-furanylmethyl)-methanesulfonamide) binds to CRY1 and stabilizes it by inhibiting FBXL3- and ubiquitin-dependent degradation of CRY1 resulting in lengthening of the circadian periods. KL001-mediated CRY1 stabilization can inhibit glucagon-induced gluconeogenesis in primary hepatocytes. Functionally, transcriptional repressor which forms a core component of the circadian clock. The circadian clock, an internal time-keeping system, regulates various physiological processes through the generation of approximately 24 hour circadian rhythms in gene expression, which are translated into rhythms in metabolism and behavior. It is derived from the Latin roots 'circa' (about) and 'diem' (day) and acts as an important regulator of a wide array of physiological functions including metabolism, sleep, body temperature, blood pressure, endocrine, immune, cardiovascular, and renal function. Consists of two major components: the central clock, residing in the suprachiasmatic nucleus (SCN) of the brain, and the peripheral clocks that are present in nearly every tissue and organ system. Both the central and peripheral clocks can be reset by environmental cues, also known as Zeitgebers (German for 'timegivers'). The predominant Zeitgeber for the central clock is light, which is sensed by retina and signals directly to the SCN. The central clock entrains the peripheral clocks through neuronal and hormonal signals, body temperature and feeding-related cues, aligning all clocks with the external light/dark cycle. Circadian rhythms allow an organism to achieve temporal homeostasis with its environment at the molecular level by regulating gene expression to create a peak of protein expression once every 24 hours to control when a particular physiological process is most active with respect to the solar day. Transcription and translation of core clock components (CLOCK, NPAS2, BMAL1, BMAL2, PER1, PER2, PER3, CRY1 and CRY2) plays a critical role in rhythm generation, whereas delays imposed by post-translational modifications (PTMs) are important for determining the period (tau) of the rhythms (tau refers to the period of a rhythm and is the length, in time, of one complete cycle). A diurnal rhythm is synchronized with the day/night cycle, while the ultradian and infradian rhythms have a period shorter and longer than 24 hours, respectively. Disruptions in the circadian rhythms contribute to the pathology of cardiovascular diseases, cancer, metabolic syndromes and aging. A transcription/translation feedback loop (TTFL) forms the core of the molecular circadian clock mechanism. Transcription factors, CLOCK or NPAS2 and BMAL1 or BMAL2, form the positive limb of the feedback loop, act in the form of a heterodimer and activate the transcription of core clock genes and clock-controlled genes (involved in key metabolic processes), harboring E-box elements (5'-CACGTG-3') within their promoters. The core clock genes: PER1/2/3 and CRY1/2 which are transcriptional repressors form the negative limb of the feedback loop and interact with the CLOCK|NPAS2-BMAL1|BMAL2 heterodimer inhibiting its activity and thereby negatively regulating their own expression. This heterodimer also activates nuclear receptors NR1D1/2 and RORA/B/G, which form a second feedback loop and which activate and repress BMAL1 transcription, respectively. CRY1 and CRY2 have redundant functions but also differential and selective contributions at least in defining the pace of the SCN circadian clock and its circadian transcriptional outputs. More potent transcriptional repressor in cerebellum and liver than CRY2, though more effective in lengthening the period of the SCN oscillator. On its side, CRY2 seems to play a critical role in tuning SCN circadian period by opposing the action of CRY1. With CRY2, is dispensable for circadian rhythm generation but necessary for the development of intercellular networks for rhythm synchrony. Capable of translocating circadian clock core proteins such as PER proteins to the nucleus. Interacts with CLOCK-BMAL1 independently of PER proteins and is found at CLOCK-BMAL1-bound sites, suggesting that CRY may act as a molecular gatekeeper to maintain CLOCK-BMAL1 in a poised and repressed state until the proper time for transcriptional activation. Represses the CLOCK-BMAL1 induced transcription of BHLHE40/DEC1, ATF4, MTA1, KLF10 and NAMPT. May repress circadian target genes expression in collaboration with HDAC1 and HDAC2 through histone deacetylation. Mediates the clock-control activation of ATR and modulates ATR-mediated DNA damage checkpoint. In liver, mediates circadian regulation of cAMP signaling and gluconeogenesis by binding to membrane-coupled G proteins and blocking glucagon-mediated increases in intracellular cAMP concentrations and CREB1 phosphorylation. Inhibits hepatic gluconeogenesis by decreasing nuclear FOXO1 levels that down-regulates gluconeogenic gene expression. Besides its role in the maintenance of the circadian clock, is also involved in the regulation of other processes. Represses glucocorticoid receptor NR3C1/GR-induced transcriptional activity by binding to glucocorticoid response elements (GREs). Plays a key role in glucose and lipid metabolism modulation, in part, through the transcriptional regulation of genes involved in these pathways, such as LEP or ACSL4. Represses PPARD and its target genes in the skeletal muscle and limits exercise capacity. Plays an essential role in the generation of circadian rhythms in the retina. Represses the transcriptional activity of NR1I2. The polypeptide is Cryptochrome-1 (Cry1) (Mus musculus (Mouse)).